A 320-amino-acid chain; its full sequence is ATP-dependent 6-phosphofructokinase (320 aa).

Gly12 serves as a coordination point for ATP. 22 to 26 serves as a coordination point for ADP; the sequence is RAVVR. ATP is bound by residues 73–74 and 103–106; these read RF and GDGS. Position 104 (Asp104) interacts with Mg(2+). 126-128 is a substrate binding site; the sequence is TID. Asp128 functions as the Proton acceptor in the catalytic mechanism. An ADP-binding site is contributed by Arg155. Residues Arg163 and 170–172 each bind substrate; that span reads MGR. ADP contacts are provided by residues 186-188 and 214-216; these read GAE and KNH. Residues Glu223, Arg244, and 250–253 each bind substrate; that span reads HIQR.

This sequence belongs to the phosphofructokinase type A (PFKA) family. ATP-dependent PFK group I subfamily. Prokaryotic clade 'B1' sub-subfamily. Homotetramer. Requires Mg(2+) as cofactor.

It localises to the cytoplasm. The catalysed reaction is beta-D-fructose 6-phosphate + ATP = beta-D-fructose 1,6-bisphosphate + ADP + H(+). It participates in carbohydrate degradation; glycolysis; D-glyceraldehyde 3-phosphate and glycerone phosphate from D-glucose: step 3/4. Allosterically activated by ADP and other diphosphonucleosides, and allosterically inhibited by phosphoenolpyruvate. Catalyzes the phosphorylation of D-fructose 6-phosphate to fructose 1,6-bisphosphate by ATP, the first committing step of glycolysis. This chain is ATP-dependent 6-phosphofructokinase, found in Teredinibacter turnerae (strain ATCC 39867 / T7901).